We begin with the raw amino-acid sequence, 650 residues long: Acetyl-coenzyme A synthetase (650 aa).

CoA-binding positions include Arg191–Arg194, Thr311, and Asn335. ATP is bound by residues Gly387 to Pro389, Asp411 to Thr416, Asp500, and Arg515. Ser523 provides a ligand contact to CoA. Residue Arg526 participates in ATP binding. 3 residues coordinate Mg(2+): Val537, His539, and Val542. CoA is bound at residue Arg584. Residue Lys609 is modified to N6-acetyllysine.

It belongs to the ATP-dependent AMP-binding enzyme family. Mg(2+) serves as cofactor. Acetylated. Deacetylation by the SIR2-homolog deacetylase activates the enzyme.

It carries out the reaction acetate + ATP + CoA = acetyl-CoA + AMP + diphosphate. Catalyzes the conversion of acetate into acetyl-CoA (AcCoA), an essential intermediate at the junction of anabolic and catabolic pathways. AcsA undergoes a two-step reaction. In the first half reaction, AcsA combines acetate with ATP to form acetyl-adenylate (AcAMP) intermediate. In the second half reaction, it can then transfer the acetyl group from AcAMP to the sulfhydryl group of CoA, forming the product AcCoA. This chain is Acetyl-coenzyme A synthetase, found in Shewanella sp. (strain W3-18-1).